A 605-amino-acid chain; its full sequence is Elongation factor 4 (605 aa).

The 183-residue stretch at 11–193 (KRIRNFSIIA…RIVTQISPPK (183 aa)) folds into the tr-type G domain. Residues 23 to 28 (DHGKST) and 140 to 143 (NKVD) contribute to the GTP site.

Belongs to the TRAFAC class translation factor GTPase superfamily. Classic translation factor GTPase family. LepA subfamily.

The protein resides in the cell membrane. It catalyses the reaction GTP + H2O = GDP + phosphate + H(+). Functionally, required for accurate and efficient protein synthesis under certain stress conditions. May act as a fidelity factor of the translation reaction, by catalyzing a one-codon backward translocation of tRNAs on improperly translocated ribosomes. Back-translocation proceeds from a post-translocation (POST) complex to a pre-translocation (PRE) complex, thus giving elongation factor G a second chance to translocate the tRNAs correctly. Binds to ribosomes in a GTP-dependent manner. This Phytoplasma australiense protein is Elongation factor 4.